We begin with the raw amino-acid sequence, 300 residues long: Epimerase family protein SAR0825 (300 aa).

The protein belongs to the NAD(P)-dependent epimerase/dehydratase family. SDR39U1 subfamily.

In Staphylococcus aureus (strain MRSA252), this protein is Epimerase family protein SAR0825.